The following is a 221-amino-acid chain: Ras-related protein Rab-27A (221 aa).

S2 is subject to N-acetylserine. At S2 the chain carries Phosphoserine. A GTP-binding site is contributed by 16–24; that stretch reads GDSGVGKTS. An Effector region motif is present at residues 38–46; the sequence is FITTVGIDF. GTP is bound by residues 74-78, 133-136, and 163-165; these read DTAGQ, NKSD, and SAA. A disulfide bridge links C123 with C188. Residues C219 and C221 are each lipidated (S-geranylgeranyl cysteine). The residue at position 221 (C221) is a Cysteine methyl ester.

Belongs to the small GTPase superfamily. Rab family. In terms of assembly, binds SYTL1, SLAC2B, MYRIP, SYTL3, SYTL4 and SYTL5. Interacts with RPH3A and RPH3A. Binds MLPH and SYTL2. Interacts with UNC13D. Does not interact with the BLOC-3 complex (heterodimer of HPS1 and HPS4). Interacts (GDP-bound form preferentially) with DENND10. High levels in eye, intestine, lung, pancreas and spleen, and low or absent in brain, liver, heart, kidney, and skeletal muscle.

Its subcellular location is the membrane. It localises to the melanosome. It is found in the late endosome. The protein localises to the lysosome. It catalyses the reaction GTP + H2O = GDP + phosphate + H(+). Regulated by guanine nucleotide exchange factors (GEFs) which promote the exchange of bound GDP for free GTP, GTPase activating proteins (GAPs) which increase the GTP hydrolysis activity, and GDP dissociation inhibitors which inhibit the dissociation of the nucleotide from the GTPase. Activated by GEFs such as DENND10. Functionally, small GTPase which cycles between active GTP-bound and inactive GDP-bound states. In its active state, binds to a variety of effector proteins to regulate homeostasis of late endocytic pathway, including endosomal positioning, maturation and secretion. Plays a role in cytotoxic granule exocytosis in lymphocytes. Required for both granule maturation and granule docking and priming at the immunologic synapse. This is Ras-related protein Rab-27A (Rab27a) from Rattus norvegicus (Rat).